Consider the following 349-residue polypeptide: Selenide, water dikinase (349 aa).

U19 is an active-site residue. Position 19 (U19) is a non-standard amino acid, selenocysteine. ATP is bound by residues K22 and 50–52 (LGD). Residue D53 participates in Mg(2+) binding. ATP is bound by residues D69, D92, and 140-142 (GHT). D92 lines the Mg(2+) pocket. D246 serves as a coordination point for Mg(2+).

It belongs to the selenophosphate synthase 1 family. Class I subfamily. In terms of assembly, homodimer. Requires Mg(2+) as cofactor.

It carries out the reaction hydrogenselenide + ATP + H2O = selenophosphate + AMP + phosphate + 2 H(+). In terms of biological role, synthesizes selenophosphate from selenide and ATP. The polypeptide is Selenide, water dikinase (Methanocaldococcus jannaschii (strain ATCC 43067 / DSM 2661 / JAL-1 / JCM 10045 / NBRC 100440) (Methanococcus jannaschii)).